Consider the following 187-residue polypeptide: Cytochrome b-245 chaperone 1 (187 aa).

Residues 20 to 42 (GIRSWSLLVGILSTGLAAAYYSG) form a helical membrane-spanning segment. The tract at residues 167–187 (ESPSERSQSSDSEPDGPGGQS) is disordered. Ser-168 and Ser-170 each carry phosphoserine.

The protein belongs to the CYBC1 family. Interacts with CYBB; CYBC1 may act as a chaperone stabilizing Cytochrome b-245 heterodimer.

The protein localises to the endoplasmic reticulum membrane. Its function is as follows. Functions as a chaperone necessary for a stable expression of the CYBA and CYBB subunits of the cytochrome b-245 heterodimer. Controls the phagocyte respiratory burst and is essential for innate immunity. The protein is Cytochrome b-245 chaperone 1 of Mus musculus (Mouse).